The chain runs to 113 residues: Putative anti-sigma factor antagonist TM1081 homolog (113 aa).

Residues 1–110 (MFPYKIVEDV…DTISEALEEV (110 aa)) enclose the STAS domain. Position 55 is a phosphoserine (Ser-55).

The protein belongs to the anti-sigma-factor antagonist family. Phosphorylated on a serine residue.

In the phosphorylated form it could act as an anti-anti-sigma factor that counteracts an anti-sigma factor and thus releases a sigma factor from inhibition. In Thermotoga neapolitana, this protein is Putative anti-sigma factor antagonist TM1081 homolog.